The primary structure comprises 119 residues: HTH-type transcriptional regulator SarX (119 aa).

The segment at residues 55–78 (LKTAMDELDLSRTKLLVSIRRLIE) is a DNA-binding region (H-T-H motif).

The protein belongs to the SarA family.

It is found in the cytoplasm. Its function is as follows. Involved in the regulation of virulence genes. Acts as a repressor of the agr locus and consequently targets genes regulated by the agr system such as sspA, hla and hlb. Binds directly to the agr promoter region. The chain is HTH-type transcriptional regulator SarX (sarX) from Staphylococcus aureus (strain USA300).